The chain runs to 224 residues: Cytidylate kinase (224 aa).

G13 to T21 contacts ATP.

It belongs to the cytidylate kinase family. Type 1 subfamily.

It is found in the cytoplasm. It catalyses the reaction CMP + ATP = CDP + ADP. It carries out the reaction dCMP + ATP = dCDP + ADP. In Nitrosomonas eutropha (strain DSM 101675 / C91 / Nm57), this protein is Cytidylate kinase.